We begin with the raw amino-acid sequence, 663 residues long: Dual specificity protein phosphatase 8 (663 aa).

Residues 23-138 enclose the Rhodanese domain; it reads GPGGPLVIDS…FSSCFPGLCE (116 aa). The Tyrosine-protein phosphatase domain occupies 160 to 302; that stretch reads GLTRILPHLY…LLEYERSLKL (143 aa). Residue cysteine 246 is the Phosphocysteine intermediate of the active site. Disordered stretches follow at residues 313–367 and 404–624; these read LGTP…STAP and YAPS…FKRR. 3 stretches are compositionally biased toward low complexity: residues 334 to 353, 427 to 448, and 546 to 557; these read STSESAATGSEAATAAREGS, LDSPSGGTLGLPSPSPDSPDSV, and SAGAPGPGNSSS. Over residues 558-577 the composition is skewed to gly residues; it reads SGGGGGGGGGGGGGGGGGGS. The segment covering 578 to 600 has biased composition (low complexity); sequence SSSNSSSSSSSSSSSSSSSSSSS.

It belongs to the protein-tyrosine phosphatase family. Non-receptor class dual specificity subfamily. In terms of assembly, monomer. As to expression, expressed predominantly in brain and lung.

The protein localises to the cytoplasm. Its subcellular location is the nucleus. The catalysed reaction is O-phospho-L-tyrosyl-[protein] + H2O = L-tyrosyl-[protein] + phosphate. It carries out the reaction O-phospho-L-seryl-[protein] + H2O = L-seryl-[protein] + phosphate. The enzyme catalyses O-phospho-L-threonyl-[protein] + H2O = L-threonyl-[protein] + phosphate. Its function is as follows. Has phosphatase activity with synthetic phosphatase substrates and negatively regulates mitogen-activated protein kinase activity, presumably by catalysing their dephosphorylation. Expected to display protein phosphatase activity toward phosphotyrosine, phosphoserine and phosphothreonine residues. The chain is Dual specificity protein phosphatase 8 (Dusp8) from Mus musculus (Mouse).